The sequence spans 174 residues: FMN-dependent NADPH-azoreductase (174 aa).

FMN is bound by residues 9–11 (TPR), 15–16 (RT), 73–76 (EYHS), and G106.

Belongs to the azoreductase type 2 family. As to quaternary structure, homotetramer. FMN is required as a cofactor.

Functionally, catalyzes the reductive cleavage of azo bond in aromatic azo compounds to the corresponding amines. Requires NADPH, but not NADH, as an electron donor for its activity. In Bacillus subtilis (strain 168), this protein is FMN-dependent NADPH-azoreductase (azr).